The sequence spans 229 residues: Large ribosomal subunit protein uL1 (229 aa).

It belongs to the universal ribosomal protein uL1 family. As to quaternary structure, part of the 50S ribosomal subunit.

Binds directly to 23S rRNA. The L1 stalk is quite mobile in the ribosome, and is involved in E site tRNA release. Functionally, protein L1 is also a translational repressor protein, it controls the translation of the L11 operon by binding to its mRNA. The protein is Large ribosomal subunit protein uL1 of Streptococcus uberis (strain ATCC BAA-854 / 0140J).